The sequence spans 199 residues: Probable nicotinate-nucleotide adenylyltransferase (199 aa).

This sequence belongs to the NadD family.

The enzyme catalyses nicotinate beta-D-ribonucleotide + ATP + H(+) = deamido-NAD(+) + diphosphate. It functions in the pathway cofactor biosynthesis; NAD(+) biosynthesis; deamido-NAD(+) from nicotinate D-ribonucleotide: step 1/1. Functionally, catalyzes the reversible adenylation of nicotinate mononucleotide (NaMN) to nicotinic acid adenine dinucleotide (NaAD). This is Probable nicotinate-nucleotide adenylyltransferase from Rhizobium johnstonii (strain DSM 114642 / LMG 32736 / 3841) (Rhizobium leguminosarum bv. viciae).